The sequence spans 662 residues: ATP-dependent zinc metalloprotease YME1 homolog (662 aa).

206–213 is an ATP binding site; that stretch reads GPPGVGKT. Histidine 425 is a binding site for Zn(2+). Glutamate 426 is an active-site residue. Histidine 429 and aspartate 503 together coordinate Zn(2+).

This sequence in the N-terminal section; belongs to the AAA ATPase family. The protein in the C-terminal section; belongs to the peptidase M41 family. Zn(2+) serves as cofactor.

Putative ATP-dependent protease. The polypeptide is ATP-dependent zinc metalloprotease YME1 homolog (Schistosoma mansoni (Blood fluke)).